The primary structure comprises 292 residues: MKNLTGIFSALLVAFNEDGSINEQGLRQIIRHNIDKMKVDGLYVGGSTGENFMLSTAEKKEIFRIAKDEAKDQIALIAQVGSVNLQEAVELGKYATELGYDCLSAVTPFYYKFSFAEIKHYYDTIIAETGNNMIVYSIPFLTGVNIGVEQFGELYKNPKILGVKFTAGDFYLLERLKKAYPNHLIWAGFDEMMLPAVALGVDGAIGSTFNVNAPRARQIFELTKQGKLAEALAVQHVTNDLIEGILANGLYLTIKELLKLQGVEAGYCREPMTAKATDKQLEVAKALYAKFL.

Residues Ser47 and Thr48 each coordinate aceneuramate. Tyr136 functions as the Proton donor in the catalytic mechanism. Catalysis depends on Lys164, which acts as the Schiff-base intermediate with substrate. Residues Thr166, Gly188, Asp190, Glu191, and Ser207 each contribute to the aceneuramate site.

This sequence belongs to the DapA family. NanA subfamily. In terms of assembly, homotetramer.

It is found in the cytoplasm. It catalyses the reaction aceneuramate = aldehydo-N-acetyl-D-mannosamine + pyruvate. It participates in amino-sugar metabolism; N-acetylneuraminate degradation; D-fructose 6-phosphate from N-acetylneuraminate: step 1/5. In terms of biological role, catalyzes the reversible aldol cleavage of N-acetylneuraminic acid (sialic acid; Neu5Ac) to form pyruvate and N-acetylmannosamine (ManNAc) via a Schiff base intermediate. The protein is N-acetylneuraminate lyase of Actinobacillus pleuropneumoniae serotype 5b (strain L20).